The sequence spans 430 residues: Glutamate-1-semialdehyde 2,1-aminomutase (430 aa).

Lysine 265 is subject to N6-(pyridoxal phosphate)lysine.

The protein belongs to the class-III pyridoxal-phosphate-dependent aminotransferase family. HemL subfamily. As to quaternary structure, homodimer. The cofactor is pyridoxal 5'-phosphate.

It is found in the cytoplasm. It carries out the reaction (S)-4-amino-5-oxopentanoate = 5-aminolevulinate. The protein operates within porphyrin-containing compound metabolism; protoporphyrin-IX biosynthesis; 5-aminolevulinate from L-glutamyl-tRNA(Glu): step 2/2. The polypeptide is Glutamate-1-semialdehyde 2,1-aminomutase (hemL) (Helicobacter pylori (strain J99 / ATCC 700824) (Campylobacter pylori J99)).